Here is a 474-residue protein sequence, read N- to C-terminus: Iroquois-class homeodomain protein IRX-2 (474 aa).

A DNA-binding region (homeobox; TALE-type) is located at residues 115–177; the sequence is DPAYRKNATR…NARRRLKKEN (63 aa). 3 disordered regions span residues 177–220, 262–373, and 420–461; these read NKMT…EDEG, EDLE…PGGS, and PGET…DTSE. Ser187 bears the Phosphoserine mark. The span at 196–210 shows a compositional bias: basic and acidic residues; sequence DASRSKEESSDKAQD. Residues 262–275 are compositionally biased toward acidic residues; the sequence is EDLEDEEDEEDECE. Low complexity-rich tracts occupy residues 293–305 and 358–373; these read EAPL…EAAP and PAAA…PGGS.

It belongs to the TALE/IRO homeobox family. In terms of tissue distribution, expressed in specific and overlapping patterns with Irx1 and Irx3 in the developing and adult metanephric kidney. In the adult metanephros, renal expression is found in the loop of Henle in the S3 proximal tubule segment and in the thick ascending limb (TAL) of the distal tubule.

The protein localises to the nucleus. The polypeptide is Iroquois-class homeodomain protein IRX-2 (Irx2) (Mus musculus (Mouse)).